Here is a 330-residue protein sequence, read N- to C-terminus: Syntaxin-121 (330 aa).

The span at 1–10 (MNNLFSSSWK) shows a compositional bias: polar residues. Residues 1-39 (MNNLFSSSWKRTGGGGGGDGDIESGGGVEMAPPPGAAAG) are disordered. At 1–284 (MNNLFSSSWK…RKHQKSTRKW (284 aa)) the chain is on the cytoplasmic side. Over residues 12–28 (TGGGGGGDGDIESGGGV) the composition is skewed to gly residues. In terms of domain architecture, t-SNARE coiled-coil homology spans 212 to 274 (VAEIQERHGA…DRGREQLVVA (63 aa)). The helical; Anchor for type IV membrane protein transmembrane segment at 285–305 (TCIAIIILLVLILVVVLPIVL) threads the bilayer. The Vesicular portion of the chain corresponds to 306-330 (KFVNNNKSSSSSPAPATPSPPPPTA). Residues 311–330 (NKSSSSSPAPATPSPPPPTA) form a disordered region. Residues 320 to 330 (PATPSPPPPTA) show a composition bias toward pro residues.

It belongs to the syntaxin family. In terms of assembly, interacts with SNAP32. In terms of tissue distribution, expressed in roots, stems, leaf blades and leaf sheaths.

The protein localises to the cell membrane. In terms of biological role, vesicle trafficking protein that functions in the secretory pathway. Involved in plant defense by mediating host resistance to the rice blast fungus Magnaporthe oryzae. The interaction with SNAP32 may contribute to host resistance to the rice blast fungus. In Oryza sativa subsp. japonica (Rice), this protein is Syntaxin-121.